Consider the following 447-residue polypeptide: MANVIVIGAQWGDEGKGKITDLLSRSADVVVRSQGGVNAGHTVVVEGQTFKLHLIPSGILYPDTECIIGSGTVIDPSVLLKEMAQLHALNVTTDNLYISQTAHVTMPYHRLLDQASEEKRGKYKIGTTGRGIGPTYADKSERIGIRVIDLINTENLRQKLEWTINYKNVILEKLYNLPPLDAKTVIEEYLEYAEILRPHVVDSSLKIYEAIRKRKNILFEGAQGTLLDLDHGTYPYVTSSNPIAGGACVGSGIGPTVIDRVIGVAKAYTTRVGEGPFPTELEGEIEQLLCDRGAEFGTTTGRRRRCGWFDAVIGRYAVRINGLDCLAITKLDVLDTLEEIKVCVAYQLDGQTCRHLPSSAGEFARCQPIYRTMPGWQQPTSDCRSLEDLPKQALDYLKFLGAIMEVPIAIISLGASRDQTIIVEDPIHGPKRALLDENGSPWDNHEF.

Residues 12–18 (GDEGKGK) and 40–42 (GHT) contribute to the GTP site. The active-site Proton acceptor is the Asp-13. Residues Asp-13 and Gly-40 each coordinate Mg(2+). IMP-binding positions include 13-16 (DEGK), 38-41 (NAGH), Thr-128, Arg-142, Gln-223, Thr-238, and Arg-302. The active-site Proton donor is His-41. 298–304 (TTTGRRR) provides a ligand contact to substrate. Residues Arg-304, 330–332 (KLD), and 412–414 (SLG) contribute to the GTP site.

The protein belongs to the adenylosuccinate synthetase family. As to quaternary structure, homodimer. The cofactor is Mg(2+).

It localises to the cytoplasm. It carries out the reaction IMP + L-aspartate + GTP = N(6)-(1,2-dicarboxyethyl)-AMP + GDP + phosphate + 2 H(+). Its pathway is purine metabolism; AMP biosynthesis via de novo pathway; AMP from IMP: step 1/2. In terms of biological role, plays an important role in the de novo pathway of purine nucleotide biosynthesis. Catalyzes the first committed step in the biosynthesis of AMP from IMP. This is Adenylosuccinate synthetase from Microcystis aeruginosa (strain NIES-843 / IAM M-2473).